A 197-amino-acid chain; its full sequence is Putative protein N5-glutamine methyltransferase MJ0928 (197 aa).

Residues 42 to 46 (GVGTG), Asp-64, and Asn-105 contribute to the S-adenosyl-L-methionine site. 105–108 (NPPY) lines the substrate pocket.

The protein belongs to the eukaryotic/archaeal PrmC-related family.

The enzyme catalyses L-glutaminyl-[protein] + S-adenosyl-L-methionine = N(5)-methyl-L-glutaminyl-[protein] + S-adenosyl-L-homocysteine + H(+). In terms of biological role, putative protein methyltransferase using S-adenosyl-L-methionine as the methyl donor. May methylate a Gln residue in target proteins. The protein is Putative protein N5-glutamine methyltransferase MJ0928 of Methanocaldococcus jannaschii (strain ATCC 43067 / DSM 2661 / JAL-1 / JCM 10045 / NBRC 100440) (Methanococcus jannaschii).